The sequence spans 598 residues: Aspartate--tRNA(Asp/Asn) ligase (598 aa).

L-aspartate is bound at residue Glu-182. The aspartate stretch occupies residues 206–209 (QIFK). Arg-228 lines the L-aspartate pocket. Residues 228–230 (RDE) and Gln-237 each bind ATP. His-456 is an L-aspartate binding site. Glu-490 contributes to the ATP binding site. Arg-497 is an L-aspartate binding site. An ATP-binding site is contributed by 542-545 (GLDR).

Belongs to the class-II aminoacyl-tRNA synthetase family. Type 1 subfamily. In terms of assembly, homodimer.

It is found in the cytoplasm. It catalyses the reaction tRNA(Asx) + L-aspartate + ATP = L-aspartyl-tRNA(Asx) + AMP + diphosphate. Functionally, aspartyl-tRNA synthetase with relaxed tRNA specificity since it is able to aspartylate not only its cognate tRNA(Asp) but also tRNA(Asn). Reaction proceeds in two steps: L-aspartate is first activated by ATP to form Asp-AMP and then transferred to the acceptor end of tRNA(Asp/Asn). In Lachnoclostridium phytofermentans (strain ATCC 700394 / DSM 18823 / ISDg) (Clostridium phytofermentans), this protein is Aspartate--tRNA(Asp/Asn) ligase.